The sequence spans 140 residues: Large ribosomal subunit protein uL14 (140 aa).

It belongs to the universal ribosomal protein uL14 family.

The polypeptide is Large ribosomal subunit protein uL14 (RPL23) (Brugia malayi (Filarial nematode worm)).